The chain runs to 557 residues: TWiK family of potassium channels protein 7 (557 aa).

Disordered regions lie at residues 1-34 (MTSS…EALL) and 128-151 (DKSG…EEEE). Residues 1-165 (MTSSSRGYQR…RKFAKLVLPH (165 aa)) lie on the Cytoplasmic side of the membrane. The segment covering 134–151 (DIDDESDDESKDEDEEEE) has biased composition (acidic residues). Residues 166–186 (VALVLLTCTYTVIGALIFYSV) form a helical membrane-spanning segment. N-linked (GlcNAc...) asparagine glycans are attached at residues Asn-220 and Asn-237. The pore-forming intramembrane region spans 270 to 290 (SIFFAVTVVTTIGYGNPVPVT). Residues 295 to 315 (IWCILFSLLGIPLTLVTIADL) traverse the membrane as a helical segment. Residues 316–368 (GKFLSEHLVWLYGNYLKLKYLILSRHRKERREHVCEHCHSHGMGHDMNIEEKR) are Cytoplasmic-facing. Residues 369–389 (IPAFLVLAILIVYTAFGGVLM) traverse the membrane as a helical segment. Positions 397 to 417 (FFTSFYWSFITMTTVGFGDLM) form an intramembrane region, pore-forming. Residues 426–446 (IILLYIILGLAITTMCIDLVG) traverse the membrane as a helical segment. Topologically, residues 447–557 (VQYIRKIHYF…SRYSLNRAFK (111 aa)) are cytoplasmic.

This sequence belongs to the two pore domain potassium channel (TC 1.A.1.8) family.

It is found in the membrane. The sequence is that of TWiK family of potassium channels protein 7 (twk-7) from Caenorhabditis elegans.